The chain runs to 417 residues: Lactose permease (417 aa).

N-formylmethionine; partial is present on Met-1. The Cytoplasmic portion of the chain corresponds to Met-1–Thr-7. Residues Asn-8 to Leu-34 form a helical membrane-spanning segment. At His-35 to Ser-41 the chain is on the periplasmic side. Residues Lys-42–Leu-70 form a helical membrane-spanning segment. The Cytoplasmic segment spans residues Gly-71 to Lys-74. The chain crosses the membrane as a helical span at residues Tyr-75–Gln-100. Residues Tyr-101–Leu-104 lie on the Periplasmic side of the membrane. A helical transmembrane segment spans residues Val-105–Ile-129. Residues Glu-130 to Phe-140 are Cytoplasmic-facing. Residues Gly-141–Thr-163 traverse the membrane as a helical segment. At Ile-164–Asn-166 the chain is on the periplasmic side. Residues Gln-167–Phe-186 form a helical membrane-spanning segment. At Ala-187–Pro-220 the chain is on the cytoplasmic side. The chain crosses the membrane as a helical span at residues Lys-221–Ser-249. At Phe-250–Thr-253 the chain is on the periplasmic side. The chain crosses the membrane as a helical span at residues Gly-254–Phe-278. The Cytoplasmic portion of the chain corresponds to Ala-279–Gly-288. Residues Lys-289–Phe-308 traverse the membrane as a helical segment. The Periplasmic segment spans residues Ala-309–Ser-311. A helical transmembrane segment spans residues Ala-312–Phe-334. The Cytoplasmic segment spans residues Lys-335 to Ser-346. Residues Ala-347–Glu-374 traverse the membrane as a helical segment. Over Ser-375–Gly-377 the chain is Periplasmic. A helical transmembrane segment spans residues Phe-378–Phe-398. Residues Thr-399–Ala-417 are Cytoplasmic-facing.

As to quaternary structure, monomer.

The protein localises to the cell inner membrane. It carries out the reaction lactose(in) + H(+)(in) = lactose(out) + H(+)(out). The catalysed reaction is melibiose(in) + H(+)(in) = melibiose(out) + H(+)(out). With respect to regulation, inhibited by the proton ionophore carbonyl cyanide m-chlorophenylhydrazone (CCCP). Responsible for transport of beta-galactosides into the cell, with the concomitant import of a proton (symport system). Can transport lactose, melibiose, the synthetic disaccharide lactulose or the analog methyl-1-thio-beta,D-galactopyranoside (TMG), but not sucrose or fructose. The substrate specificity is directed toward the galactopyranosyl moiety of the substrate. This is Lactose permease from Escherichia coli (strain K12).